The chain runs to 291 residues: 6-deoxy-6-sulfogluconolactonase (291 aa).

The a divalent metal cation site is built by glutamate 17, asparagine 148, and aspartate 198. Residue aspartate 198 is the Proton donor/acceptor of the active site.

It belongs to the SMP-30/CGR1 family. A divalent metal cation serves as cofactor.

The enzyme catalyses 6-deoxy-6-sulfo-D-glucono-1,5-lactone + H2O = 6-deoxy-6-sulfo-D-gluconate + H(+). Its function is as follows. Catalyzes the hydrolysis of 6-deoxy-6-sulfo-D-glucono-1,5-lactone to form 6-deoxy-6-sulfo-D-gluconate. Is involved in a degradation pathway of sulfoquinovose (SQ) that allows P.putida SQ1 to use SQ as the sole carbon and energy source for growth. This Pseudomonas putida (Arthrobacter siderocapsulatus) protein is 6-deoxy-6-sulfogluconolactonase.